Consider the following 703-residue polypeptide: Protein teflon (703 aa).

The C2H2-type 1 zinc-finger motif lies at 32-55; it reads MLCHFCKDIFTHLPEFMRHLQWSH. Disordered stretches follow at residues 78 to 111, 140 to 161, 205 to 239, and 339 to 434; these read SSED…PGSS, EQSY…ARKP, NDVS…MPSL, and SQQP…SKLE. Residues 84–94 show a composition bias toward polar residues; it reads QSQANSCSSGD. Residues 148-161 are compositionally biased toward basic and acidic residues; that stretch reads PDSRTEGFRCARKP. Polar residues-rich tracts occupy residues 339 to 352 and 364 to 373; these read SQQP…NNAV and SLTVISSSPI. 2 C2H2-type zinc fingers span residues 649-672 and 677-700; these read YFCE…QSVH and FTCS…KTVH.

It belongs to the Teflon family.

It is found in the nucleus. Its subcellular location is the chromosome. Specifically required in males for proper segregation of autosomal bivalents at meiosis I. Expression is required in the male germ line prior to spermatocyte stage S4. May have a role as a bridging molecule maintaining adhesion to hold autosome bivalents together via heterochromatic connections. The sequence is that of Protein teflon from Drosophila persimilis (Fruit fly).